The chain runs to 181 residues: MALRPAKIDRYVDKPAYTRREYIRGAPGPKITIFDMGNPAGDFEFEVSLHTAEPVQIRQNALEAARQQVNRYLQKNVGRSNYHFKIRVYPFQVLRENPMATGRKADRYGNGMRRPFGKPIGLAARLKKDQKILSIRVNRQHLKFAIEGARRAAMKFPCKCYYRIYDKEGNDVTTKILSQSL.

It belongs to the universal ribosomal protein uL16 family. Part of the 50S ribosomal subunit.

The protein is Large ribosomal subunit protein uL16 of Pyrococcus furiosus (strain ATCC 43587 / DSM 3638 / JCM 8422 / Vc1).